A 163-amino-acid chain; its full sequence is NADH-quinone oxidoreductase subunit I 1 (163 aa).

4Fe-4S ferredoxin-type domains follow at residues 53–83 and 94–123; these read LRRY…IEAG and VRYD…EGPN. Cysteine 63, cysteine 66, cysteine 69, cysteine 73, cysteine 103, cysteine 106, cysteine 109, and cysteine 113 together coordinate [4Fe-4S] cluster.

The protein belongs to the complex I 23 kDa subunit family. NDH-1 is composed of 14 different subunits. Subunits NuoA, H, J, K, L, M, N constitute the membrane sector of the complex. Requires [4Fe-4S] cluster as cofactor.

The protein resides in the cell inner membrane. It carries out the reaction a quinone + NADH + 5 H(+)(in) = a quinol + NAD(+) + 4 H(+)(out). In terms of biological role, NDH-1 shuttles electrons from NADH, via FMN and iron-sulfur (Fe-S) centers, to quinones in the respiratory chain. The immediate electron acceptor for the enzyme in this species is believed to be ubiquinone. Couples the redox reaction to proton translocation (for every two electrons transferred, four hydrogen ions are translocated across the cytoplasmic membrane), and thus conserves the redox energy in a proton gradient. This Rhizobium etli (strain ATCC 51251 / DSM 11541 / JCM 21823 / NBRC 15573 / CFN 42) protein is NADH-quinone oxidoreductase subunit I 1.